We begin with the raw amino-acid sequence, 377 residues long: 3-(aryl)acrylate reductase (377 aa).

FAD-binding positions include 121–130 (FALTEPGAGS), 154–156 (FIT), Arg266, Gln277, and 334–338 (QIHGG). The Proton acceptor role is filled by Glu361. An FAD-binding site is contributed by 363 to 365 (TSE).

Belongs to the acyl-CoA dehydrogenase family. FAD serves as cofactor.

The catalysed reaction is 3-phenylpropanoate + oxidized [electron-transfer flavoprotein] + H(+) = (E)-cinnamate + reduced [electron-transfer flavoprotein]. The enzyme catalyses phloretate + oxidized [electron-transfer flavoprotein] + H(+) = (E)-4-coumarate + reduced [electron-transfer flavoprotein]. It catalyses the reaction indole-3-propanoate + oxidized [electron-transfer flavoprotein] + H(+) = (E)-3-(indol-3-yl)acrylate + reduced [electron-transfer flavoprotein]. The protein operates within amino-acid degradation. Functionally, essential for the reductive metabolism of L-phenylalanine, L-tyrosine and L-tryptophan. Catalyzes the reduction of phenylacrylic acid to phenylpropionic acid, 4-hydroxy-phenylacrylic acid to 4-hydroxy-phenylpropionic acid, and indoleacrylic acid to indolepropionic acid. This is 3-(aryl)acrylate reductase from Clostridium sporogenes (strain ATCC 15579).